The sequence spans 340 residues: Melanin-concentrating hormone receptor 2 (340 aa).

At 1–39 (MNPFHASCWNTSAELLNKSWNKEFAYQTASVVDTVILPS) the chain is on the extracellular side. N-linked (GlcNAc...) asparagine glycosylation is found at Asn10 and Asn17. Residues 40-60 (MIGIICSTGLVGNILIVFTII) traverse the membrane as a helical segment. Over 61–69 (RSRKKTVPD) the chain is Cytoplasmic. A helical transmembrane segment spans residues 70–90 (IYICNLAVADLVHIVGMPFLI). Over 91–104 (HQWARGGEWVFGGP) the chain is Extracellular. The chain crosses the membrane as a helical span at residues 105–129 (LCTIITSLDTCNQFACSAIMTVMSV). Over 130 to 154 (DRYFALVQPFRLTRWRTRYKTIRIN) the chain is Cytoplasmic. Residues 155 to 175 (LGLWAASFILALPVWVYSKVI) form a helical membrane-spanning segment. Topologically, residues 176 to 200 (KFKDGVESCAFDLTSPDDVLWYTLY) are extracellular. Residues 201–221 (LTITTFFFPLPLILVCYILIL) traverse the membrane as a helical segment. The Cytoplasmic segment spans residues 222–252 (CYTWEMYQQNKDARCCNPSVPKQRVMKLTKM). The helical transmembrane segment at 253 to 273 (VLVLVVVFILSAAPYHVIQLV) threads the bilayer. Residues 274-288 (NLQMEQPTLAFYVGY) lie on the Extracellular side of the membrane. The helical transmembrane segment at 289 to 309 (YLSICLSYASSSINPFLYILL) threads the bilayer. Residues 310–340 (SGNFQKRLPQIQRRATEKEINNMGNTLKSHF) lie on the Cytoplasmic side of the membrane.

Belongs to the G-protein coupled receptor 1 family. In terms of tissue distribution, specifically expressed in the brain, with highest levels in cerebral cortex, hippocampus and amygdala. No expression detected in the cerebellum, thalamus or hypothalamus.

Its subcellular location is the cell membrane. Functionally, receptor for melanin-concentrating hormone, coupled to G proteins that activate phosphoinositide hydrolysis. This is Melanin-concentrating hormone receptor 2 (MCHR2) from Homo sapiens (Human).